The following is a 503-amino-acid chain: MKWLKRLTVIVGTFYRYRLAGLCASLMGSGWICALLKMMPQSSKLKNEPPAVRLRLALESLGPIFIKFGQVLSTRPDLIPHDYAVELAKLQDKVPPFDARLSREQIEKSLGQSIEKLYAEFETEPIASASIAQVHKARLHSGEQVAVKVLRPNLLPVIEQDLSLMRFGAGWVERLFADGKRLKPREVVAEFDKYLHDELDLMREAANASQLGRNFQNSDMLIVPKVFYDYCTSDVLTIEWMDGTPVSDIAKLKADGIDLHKLADYGVEIFFTQVFRDGFFHADMHPGNILVAADNRYIALDFGIVGTLTDYDKRYLAINFLAFFNRDYRRVATAHIESGWVPADTRAEELEAAVRAVCEPVFNKPISQISFGLVLMRLFEVSRRFNVEIQPQLVLLQKTLLNIEGLGRQLDPDLDLWKTAKPFLVKWMNGQVGPKALWRNLKNEAPDWAQIIPSLPRKISALIDENRQQEMRDAYIHLVKVQQRQSLWLAVIAVVLLLILLLK.

The chain crosses the membrane as a helical span at residues 13–35; sequence TFYRYRLAGLCASLMGSGWICAL. The region spanning 120-491 is the Protein kinase domain; sequence EFETEPIASA…QQRQSLWLAV (372 aa). Residues 126–134 and Lys148 each bind ATP; that span reads IASASIAQV. The active-site Proton acceptor is the Asp283. A helical transmembrane segment spans residues 485–502; sequence QSLWLAVIAVVLLLILLL.

This sequence belongs to the ABC1 family. UbiB subfamily.

Its subcellular location is the cell inner membrane. The protein operates within cofactor biosynthesis; ubiquinone biosynthesis [regulation]. In terms of biological role, is probably a protein kinase regulator of UbiI activity which is involved in aerobic coenzyme Q (ubiquinone) biosynthesis. This Neisseria meningitidis serogroup B (strain ATCC BAA-335 / MC58) protein is Probable protein kinase UbiB.